Consider the following 371-residue polypeptide: Homoserine O-acetyltransferase (371 aa).

One can recognise an AB hydrolase-1 domain in the interval 44-350 (NAILVEHAWT…SYGHDAFLLE (307 aa)). The active-site Nucleophile is serine 150. Arginine 217 provides a ligand contact to substrate. Active-site residues include aspartate 311 and histidine 344. Position 345 (aspartate 345) interacts with substrate.

This sequence belongs to the AB hydrolase superfamily. MetX family. As to quaternary structure, homodimer.

It localises to the cytoplasm. The catalysed reaction is L-homoserine + acetyl-CoA = O-acetyl-L-homoserine + CoA. It functions in the pathway amino-acid biosynthesis; L-methionine biosynthesis via de novo pathway; O-acetyl-L-homoserine from L-homoserine: step 1/1. Functionally, transfers an acetyl group from acetyl-CoA to L-homoserine, forming acetyl-L-homoserine. The protein is Homoserine O-acetyltransferase of Pelobacter propionicus (strain DSM 2379 / NBRC 103807 / OttBd1).